The chain runs to 137 residues: Transcription antitermination protein NusB (137 aa).

The protein belongs to the NusB family.

In terms of biological role, involved in transcription antitermination. Required for transcription of ribosomal RNA (rRNA) genes. Binds specifically to the boxA antiterminator sequence of the ribosomal RNA (rrn) operons. This chain is Transcription antitermination protein NusB, found in Actinobacillus pleuropneumoniae serotype 5b (strain L20).